The following is an 811-amino-acid chain: Protein VAC14 homolog (811 aa).

HEAT repeat units lie at residues 81 to 119 (DSYM…VAKG), 122 to 160 (FRYF…IVMQ), 240 to 278 (ISYL…EIQK), 334 to 372 (QIDY…IAPK), 375 to 412 (LLQI…LVSK), 431 to 469 (SVDF…RTGG), and 472 to 510 (INMH…SHKS). Residues 775–785 (TSASGITTTAS) show a composition bias toward low complexity. Positions 775–811 (TSASGITTTASNSRDSFITRLPPTAALSTGARKKPKQ) are disordered.

This sequence belongs to the VAC14 family. Component of the PI(3,5)P2 regulatory complex, composed of ATG18, FIG4, FAB1, VAC14 and VAC7. VAC14 nucleates the assembly of the complex and serves as a scaffold.

It localises to the cytoplasm. It is found in the vacuole membrane. Its function is as follows. The PI(3,5)P2 regulatory complex regulates both the synthesis and turnover of phosphatidylinositol 3,5-bisphosphate (PtdIns(3,5)P2). Regulates the synthesis of PtdIns(3,5)P2 by positive activation of FAB1 and by controlling FIG4 localization. The sequence is that of Protein VAC14 homolog from Schizosaccharomyces pombe (strain 972 / ATCC 24843) (Fission yeast).